A 1091-amino-acid polypeptide reads, in one-letter code: E3 ubiquitin-protein ligase TRIM33 (1091 aa).

Residues 1 to 13 show a composition bias toward gly residues; that stretch reads MADNKGGGGGGGE. Residues 1–87 are disordered; that stretch reads MADNKGGGGG…SATPASSSSS (87 aa). Low complexity predominate over residues 52-87; it reads APVAAVPTDTPAEENPAPSSSSVASSSATPASSSSS. The RING-type 1 zinc-finger motif lies at 97 to 154; sequence CAVCKLSLQSRDTEPKLLPCLHSFCRRCLPEPERQLSVPGGTNGDIQQVGVIRCLVCR. The B box-type 1; atypical zinc-finger motif lies at 180–227; sequence KSEQVCTSCEDNASAVGFCVECGEWLCKTCIEAHQRVKFTKDHIITNK. Residues C185, C188, C209, H213, C245, H248, C268, and H273 each contribute to the Zn(2+) site. Residues 240–281 form a B box-type 2 zinc finger; that stretch reads QRPVFCPVHKQEQLKLFCETCDRLTCRDCQLLEHKEHRYQFL. A coiled-coil region spans residues 269–361; it reads QLLEHKEHRY…QLESVTKERQ (93 aa). Disordered regions lie at residues 672–779 and 821–844; these read LPQP…TPPL and GKSA…GSNK. Residues 675 to 721 show a composition bias toward low complexity; it reads PTSNMNPSPAPSAMSPGSTGLSNSHTPVRPPSTSSTGSRGSCGSSSR. Basic and acidic residues predominate over residues 754-763; the sequence is KQEKAEDGRR. Over residues 768-779 the composition is skewed to low complexity; sequence LSSPESSLTPPL. The PHD-type zinc-finger motif lies at 850 to 897; that stretch reads EDWCAVCQNGGDLLCCEKCPKVFHLTCHVPTLLSFPSGEWICTFCRDL. The region spanning 920 to 1043 is the Bromo domain; the sequence is GLSPVDQMKC…LYFEEKLPAI (124 aa). Residues 1051–1091 form a disordered region; that stretch reads PLPEFEAEDDDGDVTDDSDDDDFVQPRRKRLKSEERPVHIK. Acidic residues predominate over residues 1055–1073; that stretch reads FEAEDDDGDVTDDSDDDDF. Over residues 1082–1091 the composition is skewed to basic and acidic residues; it reads KSEERPVHIK.

May interact with smad4.

Its subcellular location is the nucleus. It catalyses the reaction S-ubiquitinyl-[E2 ubiquitin-conjugating enzyme]-L-cysteine + [acceptor protein]-L-lysine = [E2 ubiquitin-conjugating enzyme]-L-cysteine + N(6)-ubiquitinyl-[acceptor protein]-L-lysine.. The protein operates within protein modification; protein ubiquitination. In terms of biological role, acts as an E3 ubiquitin-protein ligase for smad4. Promotes ectoderm embryonic development at the expense of other germ layers. Inhibits mesodermal differentiation. Promotes neural development of the ectoderm. Promotes smad4 alpha degradation via the ubiquitin proteasome pathway. May act as a transcriptional repressor. This is E3 ubiquitin-protein ligase TRIM33 (trim33) from Xenopus laevis (African clawed frog).